Consider the following 602-residue polypeptide: Elongation factor 4 (602 aa).

The 183-residue stretch at 6 to 188 (DHIRNFSIVA…AIVTQLPAPK (183 aa)) folds into the tr-type G domain. GTP is bound by residues 18–23 (DHGKST) and 135–138 (NKID).

The protein belongs to the TRAFAC class translation factor GTPase superfamily. Classic translation factor GTPase family. LepA subfamily.

The protein localises to the cell inner membrane. The enzyme catalyses GTP + H2O = GDP + phosphate + H(+). Functionally, required for accurate and efficient protein synthesis under certain stress conditions. May act as a fidelity factor of the translation reaction, by catalyzing a one-codon backward translocation of tRNAs on improperly translocated ribosomes. Back-translocation proceeds from a post-translocation (POST) complex to a pre-translocation (PRE) complex, thus giving elongation factor G a second chance to translocate the tRNAs correctly. Binds to ribosomes in a GTP-dependent manner. The chain is Elongation factor 4 from Brucella anthropi (strain ATCC 49188 / DSM 6882 / CCUG 24695 / JCM 21032 / LMG 3331 / NBRC 15819 / NCTC 12168 / Alc 37) (Ochrobactrum anthropi).